We begin with the raw amino-acid sequence, 354 residues long: Divinyl chlorophyll a/b light-harvesting protein PcbF (354 aa).

6 helical membrane passes run 27–47 (FIASHAAHTGMIAFGAGSNTL), 88–108 (VVTLAILHLILSMVYGAGGLL), 140–160 (FILGHHLILFGLACAWFVEWA), 201–221 (VMGGHAFLAFAEITGGCFHAI), 248–268 (AILSFSLAGIGWMAIVAAFWC), and 315–335 (TANFHYIAGFFAFQGHLWHAL).

The protein belongs to the PsbB/PsbC family. IsiA/Pcb subfamily. As to quaternary structure, the antenna complex consists of divinyl chlorophylls (a and b) and divinyl chlorophyll a/b binding proteins and binds more divinyl chlorophyll b than does the antenna complex from high-light-adapted Prochlorococcus. Divinyl chlorophyll a is required as a cofactor. It depends on divinyl chlorophyll b as a cofactor.

It is found in the cellular thylakoid membrane. In terms of biological role, the antenna complex functions as a light receptor, it captures and delivers excitation energy to photosystems II and I. The Prochlorales pcb genes are not related to higher plant LHCs. The sequence is that of Divinyl chlorophyll a/b light-harvesting protein PcbF (pcbF) from Prochlorococcus marinus (strain SARG / CCMP1375 / SS120).